A 107-amino-acid chain; its full sequence is UPF0213 protein SG0387 (107 aa).

In terms of domain architecture, GIY-YIG spans 4–79; the sequence is SLWHLYLIRT…KQLSRAQKEH (76 aa).

It belongs to the UPF0213 family.

The polypeptide is UPF0213 protein SG0387 (Sodalis glossinidius (strain morsitans)).